We begin with the raw amino-acid sequence, 86 residues long: Large ribosomal subunit protein eL31 (86 aa).

It belongs to the eukaryotic ribosomal protein eL31 family.

In Methanopyrus kandleri (strain AV19 / DSM 6324 / JCM 9639 / NBRC 100938), this protein is Large ribosomal subunit protein eL31.